The following is a 63-amino-acid chain: MNQLNQFILIFLLLIVILFIFFLIPKKEPEIKTFAYEVPIRYSNPRSLYSLPKWKTFYGRNWL.

Residues L4–I24 form a helical membrane-spanning segment.

It localises to the membrane. This is an uncharacterized protein from Invertebrate iridescent virus 6 (IIV-6).